The primary structure comprises 496 residues: 1-aminocyclopropane-1-carboxylate synthase 4 (496 aa).

Lys300 is subject to N6-(pyridoxal phosphate)lysine.

This sequence belongs to the class-I pyridoxal-phosphate-dependent aminotransferase family. Requires pyridoxal 5'-phosphate as cofactor. Expressed in leaves. Expressed in shoots and leaf blades. Expressed at low levels in leaf sheaths.

The catalysed reaction is S-adenosyl-L-methionine = 1-aminocyclopropane-1-carboxylate + S-methyl-5'-thioadenosine + H(+). Its pathway is alkene biosynthesis; ethylene biosynthesis via S-adenosyl-L-methionine; ethylene from S-adenosyl-L-methionine: step 1/2. In terms of biological role, catalyzes the formation of 1-aminocyclopropane-1-carboxylate, a direct precursor of ethylene in higher plants. The polypeptide is 1-aminocyclopropane-1-carboxylate synthase 4 (Oryza sativa subsp. japonica (Rice)).